Consider the following 214-residue polypeptide: DELTA-actitoxin-Aeq1a (214 aa).

An N-terminal signal peptide occupies residues Met1–Ala19. A propeptide spanning residues Leu20–Arg35 is cleaved from the precursor. The plays an important role in the hemolytic activity stretch occupies residues Asp38 to Ala47. An N-terminal region region spans residues Gly46 to Lys65. 7 residues coordinate phosphocholine: Ser89, Val122, Ser140, Pro142, Tyr168, Tyr172, and Tyr173. A trp-rich region, which is important for the binding to lipid membrane region spans residues Ser140–Arg155. The short motif at Arg179–Asp181 is the Cell attachment site, crucial for protein stability element.

This sequence belongs to the actinoporin family. Sea anemone subfamily. Octamer or nonamer in membranes. Monomer in the soluble state.

The protein localises to the secreted. It is found in the nematocyst. Its subcellular location is the target cell membrane. Pore-forming protein that forms cations-selective hydrophilic pores of around 1 nm and causes cardiac stimulation and cytolysis. Pore formation is a multi-step process that involves specific recognition of membrane sphingomyelin (but neither cholesterol nor phosphatidylcholine) using aromatic rich region and adjacent phosphocholine (POC) binding site, firm binding to the membrane (mainly driven by hydrophobic interactions) accompanied by the transfer of the N-terminal region to the lipid-water interface and finally pore formation after oligomerization of monomers. Cytolytic effects include red blood cells hemolysis, platelet aggregation and lysis, cytotoxic and cytostatic effects on fibroblasts. Lethality in mammals has been ascribed to severe vasospasm of coronary vessels, cardiac arrhythmia, and inotropic effects. This is DELTA-actitoxin-Aeq1a from Actinia equina (Beadlet anemone).